Here is a 141-residue protein sequence, read N- to C-terminus: Large ribosomal subunit protein uL16 (141 aa).

The disordered stretch occupies residues 1-20; that stretch reads MLMPKRTKYRKQMKGRNRGK.

Belongs to the universal ribosomal protein uL16 family. In terms of assembly, part of the 50S ribosomal subunit.

Binds 23S rRNA and is also seen to make contacts with the A and possibly P site tRNAs. The polypeptide is Large ribosomal subunit protein uL16 (Helicobacter hepaticus (strain ATCC 51449 / 3B1)).